The primary structure comprises 350 residues: Transmembrane protein 185B (350 aa).

7 helical membrane-spanning segments follow: residues Leu16–Ile36, Trp41–Gly61, Phe81–Val101, Phe111–Val131, Trp168–Tyr188, Val211–Leu231, and Thr240–Thr260.

The protein belongs to the TMEM185 family.

The protein resides in the membrane. This is Transmembrane protein 185B (TMEM185B) from Homo sapiens (Human).